The following is a 2629-amino-acid chain: Telomerase protein component 1 (2629 aa).

4 TEP1 N-terminal repeats span residues 1–30 (MEKLCGHVPGHSDILSLKNRCLTMLPDLQP), 31–60 (LEKIHGHRSVHSDILSLENQCLTMLSDLQP), 61–90 (TERIDGHISVHPDILSLENRCLTMLPDLQP), and 91–120 (LEKLCGHMSSHPDVLSLENQCLATLPTVKS). In terms of domain architecture, TROVE spans 227–685 (LKLTSGDSGF…VKHNLSPMPG (459 aa)). Basic residues predominate over residues 386–397 (PRKHRSKRRSRQ). Residues 386 to 412 (PRKHRSKRRSRQPPRPQKTERPFSERG) are disordered. The span at 402 to 412 (QKTERPFSERG) shows a compositional bias: basic and acidic residues. One can recognise an NACHT domain in the interval 1171–1578 (RLSLVTGQAG…EFLTNLHVVA (408 aa)). 1177–1184 (GQAGQGKT) contacts ATP. WD repeat units follow at residues 1420–1462 (VLPQ…EVLA), 1681–1720 (TMSSSPTAVAFSPNGQRAAVGTASGTIYLLNLKTWQEEKA), 1723–1761 (SGCDGISSFAFLSDTALFLTTFDGHLELWDLQHGCWVFQ), 1764–1803 (AHQYQITGCCLSPDRRLLATVCLGGYLKLWDTVRGQLAFQ), 1805–1844 (THPKSLNCVAFHPEGQVVATGSWAGSITFFQADGLKVTKE), 1847–1886 (APGPSVCSLAFNKPGKIVAVGRIDGTVELWAWQEGARLAA), 1889–1930 (AQCG…GCLG), 1932–1971 (LPLSPALSVALNPDGDQVAVGYREDGINIYKISSGSQGPQ), 1974–2013 (ELNVAVSALVWLSPSVLVSGAEDGSLHGWMFKGDSLHSLW), 2015–2054 (LSRYQKPVLGLAASRELMAAASEDFTVRLWPRQLLTQPHV), 2067–2106 (GHEGPVCCCSFSPDGGILATAGRDRNLLCWDMKIAQAPLL), 2113–2151 (CHRDWITGCAWTKDNILVSCSSDGSVGLWNPEAGQQLGQ), 2154–2191 (GHQSAVSAVVAVEEHIVSVSRDGTLKVWDHQGVELTSI), 2193–2241 (AHSG…QIRT), 2244–2282 (GHSGPVTAAAASEASGLLLTSDDSSVQLWQIPKEADDSY), 2285–2324 (RSSVAITAVAWAPDGSMVVSGNEAGELTLWQQAKAVATAQ), 2326–2362 (PGRVSHLIWYSANSFFVLSANENVSEWQVGLRKGSTS), 2375–2424 (EDWG…SSIL), 2467–2507 (PNGS…GEWI), 2555–2592 (IHLGSVTALHVLPGLLVTASKDRDVKLWERPSMQLLGL), and 2594–2628 (RCEGPVSCLEPWMEPSSPLQLAVGDTQGNLYFLSW).

Associated component of the telomerase holoenzyme complex. Component of the vault ribonucleoprotein particle, at least composed of MVP, PARP4 and one or more vault RNAs (vRNAs). Binds to VAULTRC1, VAULTRC2 and VAULTRC4/hvg4 vRNAs. Ubiquitous.

The protein localises to the nucleus. The protein resides in the chromosome. It is found in the telomere. Its function is as follows. Component of the telomerase ribonucleoprotein complex that is essential for the replication of chromosome termini. Also a component of the ribonucleoprotein vaults particle, a multi-subunit structure involved in nucleo-cytoplasmic transport. Responsible for the localizing and stabilizing vault RNA (vRNA) association in the vault ribonucleoprotein particle. The protein is Telomerase protein component 1 (Tep1) of Mus musculus (Mouse).